We begin with the raw amino-acid sequence, 110 residues long: UPF0060 membrane protein Mmwyl1_1139 (110 aa).

A run of 4 helical transmembrane segments spans residues 7 to 27 (ISLF…PYLW), 33 to 53 (TIWL…LLTL), 63 to 83 (AAYG…VDGI), and 87 to 107 (TWDM…MFAP).

The protein belongs to the UPF0060 family.

It is found in the cell inner membrane. This Marinomonas sp. (strain MWYL1) protein is UPF0060 membrane protein Mmwyl1_1139.